Consider the following 156-residue polypeptide: Small ribosomal subunit protein uS7 (156 aa).

The protein belongs to the universal ribosomal protein uS7 family. As to quaternary structure, part of the 30S ribosomal subunit. Contacts proteins S9 and S11.

Functionally, one of the primary rRNA binding proteins, it binds directly to 16S rRNA where it nucleates assembly of the head domain of the 30S subunit. Is located at the subunit interface close to the decoding center, probably blocks exit of the E-site tRNA. The protein is Small ribosomal subunit protein uS7 of Listeria innocua serovar 6a (strain ATCC BAA-680 / CLIP 11262).